The sequence spans 396 residues: Tetraacyldisaccharide 4'-kinase (396 aa).

Positions 1–336 (MNWYELYWQR…IILKKLREKF (336 aa)) are tetraacyldisaccharide 4'-kinase. The interval 337 to 396 (MDPKLLDILVCPLCKGSLIYKKDRLELICKADRLAYPIRDGIPVMLEDEARKLPDEEEIK) is UPF0434.

This sequence in the N-terminal section; belongs to the LpxK family. It in the C-terminal section; belongs to the UPF0434 family.

It carries out the reaction a lipid A disaccharide + ATP = a lipid IVA + ADP + H(+). The protein operates within glycolipid biosynthesis; lipid IV(A) biosynthesis; lipid IV(A) from (3R)-3-hydroxytetradecanoyl-[acyl-carrier-protein] and UDP-N-acetyl-alpha-D-glucosamine: step 6/6. Its function is as follows. Transfers the gamma-phosphate of ATP to the 4'-position of a tetraacyldisaccharide 1-phosphate intermediate (termed DS-1-P) to form tetraacyldisaccharide 1,4'-bis-phosphate (lipid IVA). The protein is Tetraacyldisaccharide 4'-kinase (lpxK) of Nitrosomonas europaea (strain ATCC 19718 / CIP 103999 / KCTC 2705 / NBRC 14298).